The chain runs to 452 residues: UDP-N-acetylmuramoylalanine--D-glutamate ligase (452 aa).

Residue 115-121 coordinates ATP; sequence GTNGKTT.

This sequence belongs to the MurCDEF family.

It localises to the cytoplasm. It catalyses the reaction UDP-N-acetyl-alpha-D-muramoyl-L-alanine + D-glutamate + ATP = UDP-N-acetyl-alpha-D-muramoyl-L-alanyl-D-glutamate + ADP + phosphate + H(+). The protein operates within cell wall biogenesis; peptidoglycan biosynthesis. Cell wall formation. Catalyzes the addition of glutamate to the nucleotide precursor UDP-N-acetylmuramoyl-L-alanine (UMA). In Geobacter sp. (strain M21), this protein is UDP-N-acetylmuramoylalanine--D-glutamate ligase.